The following is a 1108-amino-acid chain: Unconventional myosin-Ie (1108 aa).

Positions 19–692 constitute a Myosin motor domain; sequence SGVDDMVLLS…SLFLLEEMRE (674 aa). 112 to 119 serves as a coordination point for ATP; that stretch reads GESGAGKT. Residues 581-591 are actin-binding; the sequence is PHYIRCIKPNE. Residues 695–724 enclose the IQ domain; that stretch reads YDGYARVIQKSWRKFVARKKYVQMREEASD. Positions 730-922 constitute a TH1 domain; it reads KERRRNSINR…NKVLQVSIGP (193 aa). Residues 919–966 form a disordered region; it reads SIGPGLPKNSRPTRRNTTQNTGYSSGTQNANYPVRAAPPPPGYHQNGV. Residues 933 to 949 are compositionally biased toward polar residues; sequence RNTTQNTGYSSGTQNAN. 2 positions are modified to phosphoserine: serine 980 and serine 1002. Residues 993–1053 are disordered; the sequence is ARPPLPRQQS…KPQPKPKPQV (61 aa). Residues 999–1013 are compositionally biased toward polar residues; that stretch reads RQQSTSSDRVSQTPE. Residues 1035–1052 show a composition bias toward pro residues; it reads RPPPAGGRPKPQPKPKPQ. The SH3 domain maps to 1051–1108; that stretch reads PQVPQCKALYAYDAQDTDELSFNANDIIDIIKEDPSGWWTGRLRGKQGLFPNNYVTKI.

It belongs to the TRAFAC class myosin-kinesin ATPase superfamily. Myosin family. As to quaternary structure, interacts with CALM and F-actin. Interacts (via SH3 domain) with SYNJ1, DNM1 and DNM2. Interacts with ARL14EP. Interacts with CARMIL1. Expressed in the immune system. In the kidney, predominantly expressed in the glomerulus, including podocytes.

The protein localises to the cytoplasm. It is found in the cytoskeleton. It localises to the cytoplasmic vesicle. Its subcellular location is the clathrin-coated vesicle. The protein resides in the cell junction. In terms of biological role, actin-based motor molecule with ATPase activity. Unconventional myosins serve in intracellular movements. Their highly divergent tails bind to membranous compartments, which are then moved relative to actin filaments. Binds to membranes containing anionic phospholipids via its tail domain. Involved in clathrin-mediated endocytosis and intracellular movement of clathrin-coated vesicles. Required for normal morphology of the glomerular basement membrane, normal development of foot processes by kidney podocytes and normal kidney function. In dendritic cells, may control the movement of class II-containing cytoplasmic vesicles along the actin cytoskeleton by connecting them with the actin network via ARL14EP and ARL14. The polypeptide is Unconventional myosin-Ie (MYO1E) (Homo sapiens (Human)).